The following is a 616-amino-acid chain: Chaperone protein HscA homolog (616 aa).

The protein belongs to the heat shock protein 70 family.

Its function is as follows. Chaperone involved in the maturation of iron-sulfur cluster-containing proteins. Has a low intrinsic ATPase activity which is markedly stimulated by HscB. In Aliivibrio fischeri (strain ATCC 700601 / ES114) (Vibrio fischeri), this protein is Chaperone protein HscA homolog.